We begin with the raw amino-acid sequence, 299 residues long: Tyrosine recombinase XerC (299 aa).

Residues 1-81 (MDEAIRRFIE…SWRQFYHWLQ (81 aa)) form the Core-binding (CB) domain. One can recognise a Tyr recombinase domain in the interval 102 to 281 (LLPKALPVDG…DFQHLAKVYD (180 aa)). Catalysis depends on residues R142, K166, H233, R236, and H259. Y268 (O-(3'-phospho-DNA)-tyrosine intermediate) is an active-site residue.

The protein belongs to the 'phage' integrase family. XerC subfamily. Forms a cyclic heterotetrameric complex composed of two molecules of XerC and two molecules of XerD.

The protein resides in the cytoplasm. Its function is as follows. Site-specific tyrosine recombinase, which acts by catalyzing the cutting and rejoining of the recombining DNA molecules. The XerC-XerD complex is essential to convert dimers of the bacterial chromosome into monomers to permit their segregation at cell division. It also contributes to the segregational stability of plasmids. In Chromobacterium violaceum (strain ATCC 12472 / DSM 30191 / JCM 1249 / CCUG 213 / NBRC 12614 / NCIMB 9131 / NCTC 9757 / MK), this protein is Tyrosine recombinase XerC.